The primary structure comprises 96 residues: Envelope glycoprotein N (96 aa).

Positions 1-21 are cleaved as a signal peptide; sequence MPRSPLIVAVVAAALFAIVRG. Residues 22–54 are Virion surface-facing; that stretch reads RDPLLDAMRREGAMDFWSAGCYARGVPLSEPPQ. Residues 55 to 75 traverse the membrane as a helical segment; it reads ALVVFYVALTAVMVAVALYAY. At 76 to 96 the chain is on the intravirion side; that stretch reads GLCFRLMGASGPNKKESRGRG.

It belongs to the herpesviridae glycoprotein N family. As to quaternary structure, interacts (via N-terminus) with gM (via N-terminus). The gM-gN heterodimer forms the gCII complex.

Its subcellular location is the virion membrane. The protein localises to the host membrane. It localises to the host Golgi apparatus. It is found in the host trans-Golgi network. In terms of biological role, envelope glycoprotein necessary for proper maturation of gM and modulation of its membrane fusion activity. Also plays a critical role in virion morphogenesis. In Bos taurus (Bovine), this protein is Envelope glycoprotein N.